A 103-amino-acid chain; its full sequence is Cell division topological specificity factor (103 aa).

The protein belongs to the MinE family.

Its function is as follows. Prevents the cell division inhibition by proteins MinC and MinD at internal division sites while permitting inhibition at polar sites. This ensures cell division at the proper site by restricting the formation of a division septum at the midpoint of the long axis of the cell. The protein is Cell division topological specificity factor of Prochlorococcus marinus (strain MIT 9211).